Reading from the N-terminus, the 147-residue chain is 3-dehydroquinate dehydratase (147 aa).

Tyrosine 22 acts as the Proton acceptor in catalysis. 3 residues coordinate substrate: asparagine 73, histidine 79, and aspartate 86. Catalysis depends on histidine 99, which acts as the Proton donor. Substrate contacts are provided by residues 100–101 (LS) and arginine 110.

The protein belongs to the type-II 3-dehydroquinase family. Homododecamer.

It catalyses the reaction 3-dehydroquinate = 3-dehydroshikimate + H2O. Its pathway is metabolic intermediate biosynthesis; chorismate biosynthesis; chorismate from D-erythrose 4-phosphate and phosphoenolpyruvate: step 3/7. Functionally, catalyzes a trans-dehydration via an enolate intermediate. This Synechococcus sp. (strain WH7803) protein is 3-dehydroquinate dehydratase.